The sequence spans 101 residues: Small ribosomal subunit protein uS10 (101 aa).

This sequence belongs to the universal ribosomal protein uS10 family. Part of the 30S ribosomal subunit.

Its function is as follows. Involved in the binding of tRNA to the ribosomes. This is Small ribosomal subunit protein uS10 from Parabacteroides distasonis (strain ATCC 8503 / DSM 20701 / CIP 104284 / JCM 5825 / NCTC 11152).